A 663-amino-acid polypeptide reads, in one-letter code: MTMVEHYPFKIHSDFEPQGDQPQAIEEIVEGIKAGKRHQTLLGATGTGKTFTMSNVIKEVGKPTLIIAHNKTLAGQLYSEFKEFFPENRVEYFVSYYDYYQPEAYVPSTDTFIEKDASINDEIDQLRHSATSALFERDDVIIIASVSCIYGLGNPEEYKDLVVSVRVGMEMDRSELLRKLVDVQYTRNDIDFQRGTFRVRGDVVEIFPASKEELCIRVEFFGDEIDRIREVNYLTGEVLKEREHFAIFPASHFVTREEKLKVAIERIEKELEERLKELRDENKLLEAQRLEQRTNYDLEMMREMGFCSGIENYSVHLTLRPLGSTPYTLLDYFGDDWLVMIDESHVTLPQVRGMYNGDRARKQVLVDHGFRLPSALDNRPLKFEEFEEKTKQLVYVSATPGPYEIEHTDKMVEQIIRPTGLLDPKIEVRPTENQIDDLLSEIQTRVERNERVLVTTLTKKMSEDLTTYMKEAGIKVNYLHSEIKTLERIEIIRDLRMGTYDVIVGINLLREGIDIPEVSLVVILDADKEGFLRSNRSLIQTIGRAARNDKGEVIMYADKMTDSMKYAIDETQRRREIQMKHNEKHGITPKTINKKIHDLISATVENDENNDKAQTVIPKKMTKKERQKTIDNIEKEMKQAAKDLDFEKATELRDMLFELKAEG.

Positions 30–414 (EGIKAGKRHQ…IEHTDKMVEQ (385 aa)) constitute a Helicase ATP-binding domain. An ATP-binding site is contributed by 43-50 (GATGTGKT). The short motif at 96–119 (YYDYYQPEAYVPSTDTFIEKDASI) is the Beta-hairpin element. Residues 434 to 600 (QIDDLLSEIQ…TINKKIHDLI (167 aa)) enclose the Helicase C-terminal domain. Positions 627 to 662 (QKTIDNIEKEMKQAAKDLDFEKATELRDMLFELKAE) constitute a UVR domain.

Belongs to the UvrB family. In terms of assembly, forms a heterotetramer with UvrA during the search for lesions. Interacts with UvrC in an incision complex.

The protein localises to the cytoplasm. In terms of biological role, the UvrABC repair system catalyzes the recognition and processing of DNA lesions. A damage recognition complex composed of 2 UvrA and 2 UvrB subunits scans DNA for abnormalities. Upon binding of the UvrA(2)B(2) complex to a putative damaged site, the DNA wraps around one UvrB monomer. DNA wrap is dependent on ATP binding by UvrB and probably causes local melting of the DNA helix, facilitating insertion of UvrB beta-hairpin between the DNA strands. Then UvrB probes one DNA strand for the presence of a lesion. If a lesion is found the UvrA subunits dissociate and the UvrB-DNA preincision complex is formed. This complex is subsequently bound by UvrC and the second UvrB is released. If no lesion is found, the DNA wraps around the other UvrB subunit that will check the other stand for damage. In Staphylococcus aureus (strain MSSA476), this protein is UvrABC system protein B.